We begin with the raw amino-acid sequence, 210 residues long: TM2 domain-containing protein C02F5.13 (210 aa).

A signal peptide spans 1 to 18 (MRRLPWLIPFFLVNISNG). Topologically, residues 19–138 (NNEFRIEFEY…PRTFTKSTPC (120 aa)) are extracellular. N-linked (GlcNAc...) asparagine glycosylation is present at Asn91. Residues 139–159 (IIYNGHYFLTTLLYSIFLGVV) form a helical membrane-spanning segment. The TM2 domain occupies 143–191 (GHYFLTTLLYSIFLGVVAVDRFCLGYSAMAVGKLMTLGGFGIWWIVDIF). The Cytoplasmic segment spans residues 160 to 178 (AVDRFCLGYSAMAVGKLMT). A helical transmembrane segment spans residues 179 to 199 (LGGFGIWWIVDIFLLVLGVLG). Residues 200–210 (PADDSSWEPYY) lie on the Extracellular side of the membrane.

This sequence belongs to the TM2 family.

The protein localises to the membrane. In Caenorhabditis elegans, this protein is TM2 domain-containing protein C02F5.13.